We begin with the raw amino-acid sequence, 246 residues long: Thaumatin-like protein 1a (246 aa).

The N-terminal stretch at Met1–Ala24 is a signal peptide. 8 disulfides stabilise this stretch: Cys33-Cys245, Cys81-Cys91, Cys96-Cys103, Cys151-Cys234, Cys156-Cys217, Cys164-Cys180, Cys184-Cys193, and Cys194-Cys204.

The protein belongs to the thaumatin family.

The protein resides in the secreted. The protein is Thaumatin-like protein 1a (TL1) of Malus domestica (Apple).